The sequence spans 342 residues: Ribosomal RNA small subunit methyltransferase C (342 aa).

The protein belongs to the methyltransferase superfamily. RsmC family. Monomer.

The protein localises to the cytoplasm. It catalyses the reaction guanosine(1207) in 16S rRNA + S-adenosyl-L-methionine = N(2)-methylguanosine(1207) in 16S rRNA + S-adenosyl-L-homocysteine + H(+). Its function is as follows. Specifically methylates the guanine in position 1207 of 16S rRNA in the 30S particle. The chain is Ribosomal RNA small subunit methyltransferase C from Cronobacter sakazakii (strain ATCC BAA-894) (Enterobacter sakazakii).